A 473-amino-acid polypeptide reads, in one-letter code: Photosystem II CP43 reaction center protein (473 aa).

A propeptide spanning residues 1–14 (MKILYSQRRFYHVE) is cleaved from the precursor. A run of 5 helical transmembrane segments spans residues 69 to 93 (LFEVAHFLPEKPLYEQGCILLPHLA), 134 to 155 (LIGPEILEESYPFFGYDWRDKN), 178 to 200 (KAMFFGGVYDTWAPGGGDVRYIN), 255 to 275 (KPFGWARRAFVWSGEAYLSYS), and 291 to 312 (WYNNTAYPSEFYGPTGPEASQA). A [CaMn4O5] cluster-binding site is contributed by Glu367. Residues 447–471 (RARAAAAGFEKGINRENEPVLSMKL) form a helical membrane-spanning segment.

Belongs to the PsbB/PsbC family. PsbC subfamily. As to quaternary structure, PSII is composed of 1 copy each of membrane proteins PsbA, PsbB, PsbC, PsbD, PsbE, PsbF, PsbH, PsbI, PsbJ, PsbK, PsbL, PsbM, PsbT, PsbY, PsbZ, Psb30/Ycf12, at least 3 peripheral proteins of the oxygen-evolving complex and a large number of cofactors. It forms dimeric complexes. Binds multiple chlorophylls and provides some of the ligands for the Ca-4Mn-5O cluster of the oxygen-evolving complex. It may also provide a ligand for a Cl- that is required for oxygen evolution. PSII binds additional chlorophylls, carotenoids and specific lipids. is required as a cofactor.

Its subcellular location is the plastid. It is found in the chloroplast thylakoid membrane. Functionally, one of the components of the core complex of photosystem II (PSII). It binds chlorophyll and helps catalyze the primary light-induced photochemical processes of PSII. PSII is a light-driven water:plastoquinone oxidoreductase, using light energy to abstract electrons from H(2)O, generating O(2) and a proton gradient subsequently used for ATP formation. This is Photosystem II CP43 reaction center protein from Galdieria sulphuraria (Red alga).